A 70-amino-acid polypeptide reads, in one-letter code: uncharacterized protein (70 aa).

Residues 50 to 70 (INVVLVLIIALIIFILMLDGV) traverse the membrane as a helical segment.

The protein resides in the membrane. This is an uncharacterized protein from Dictyostelium discoideum (Social amoeba).